The primary structure comprises 449 residues: Bifunctional protein GlmU (449 aa).

Positions 1–225 (MLSVAILAAG…NGELQGINNR (225 aa)) are pyrophosphorylase. UDP-N-acetyl-alpha-D-glucosamine-binding positions include 7–10 (LAAG), lysine 21, glutamine 73, and 78–79 (GT). Aspartate 103 provides a ligand contact to Mg(2+). Residues glycine 140, glutamate 154, asparagine 169, and asparagine 223 each coordinate UDP-N-acetyl-alpha-D-glucosamine. Mg(2+) is bound at residue asparagine 223. The tract at residues 226–246 (IHLSECEECIQNSIKEKHMLN) is linker. Residues 247 to 449 (GVTFINKASC…NIENWKKKKS (203 aa)) are N-acetyltransferase. Positions 328 and 346 each coordinate UDP-N-acetyl-alpha-D-glucosamine. Catalysis depends on histidine 358, which acts as the Proton acceptor. UDP-N-acetyl-alpha-D-glucosamine is bound by residues tyrosine 361 and asparagine 372. Acetyl-CoA is bound by residues alanine 375, alanine 418, and arginine 435.

The protein in the N-terminal section; belongs to the N-acetylglucosamine-1-phosphate uridyltransferase family. It in the C-terminal section; belongs to the transferase hexapeptide repeat family. Homotrimer. Mg(2+) is required as a cofactor.

The protein resides in the cytoplasm. The catalysed reaction is alpha-D-glucosamine 1-phosphate + acetyl-CoA = N-acetyl-alpha-D-glucosamine 1-phosphate + CoA + H(+). It catalyses the reaction N-acetyl-alpha-D-glucosamine 1-phosphate + UTP + H(+) = UDP-N-acetyl-alpha-D-glucosamine + diphosphate. It functions in the pathway nucleotide-sugar biosynthesis; UDP-N-acetyl-alpha-D-glucosamine biosynthesis; N-acetyl-alpha-D-glucosamine 1-phosphate from alpha-D-glucosamine 6-phosphate (route II): step 2/2. The protein operates within nucleotide-sugar biosynthesis; UDP-N-acetyl-alpha-D-glucosamine biosynthesis; UDP-N-acetyl-alpha-D-glucosamine from N-acetyl-alpha-D-glucosamine 1-phosphate: step 1/1. Its pathway is bacterial outer membrane biogenesis; LPS lipid A biosynthesis. Its function is as follows. Catalyzes the last two sequential reactions in the de novo biosynthetic pathway for UDP-N-acetylglucosamine (UDP-GlcNAc). The C-terminal domain catalyzes the transfer of acetyl group from acetyl coenzyme A to glucosamine-1-phosphate (GlcN-1-P) to produce N-acetylglucosamine-1-phosphate (GlcNAc-1-P), which is converted into UDP-GlcNAc by the transfer of uridine 5-monophosphate (from uridine 5-triphosphate), a reaction catalyzed by the N-terminal domain. This is Bifunctional protein GlmU from Prochlorococcus marinus (strain AS9601).